The sequence spans 204 residues: Thiamine-phosphate synthase (204 aa).

4-amino-2-methyl-5-(diphosphooxymethyl)pyrimidine-binding positions include 32–36 (QLRMK) and aspartate 64. Residues aspartate 65 and aspartate 84 each contribute to the Mg(2+) site. Threonine 103 provides a ligand contact to 4-amino-2-methyl-5-(diphosphooxymethyl)pyrimidine. A 2-[(2R,5Z)-2-carboxy-4-methylthiazol-5(2H)-ylidene]ethyl phosphate-binding site is contributed by 129–131 (TTT). Position 132 (lysine 132) interacts with 4-amino-2-methyl-5-(diphosphooxymethyl)pyrimidine. Glycine 165 is a binding site for 2-[(2R,5Z)-2-carboxy-4-methylthiazol-5(2H)-ylidene]ethyl phosphate.

The protein belongs to the thiamine-phosphate synthase family. Requires Mg(2+) as cofactor.

The catalysed reaction is 2-[(2R,5Z)-2-carboxy-4-methylthiazol-5(2H)-ylidene]ethyl phosphate + 4-amino-2-methyl-5-(diphosphooxymethyl)pyrimidine + 2 H(+) = thiamine phosphate + CO2 + diphosphate. It carries out the reaction 2-(2-carboxy-4-methylthiazol-5-yl)ethyl phosphate + 4-amino-2-methyl-5-(diphosphooxymethyl)pyrimidine + 2 H(+) = thiamine phosphate + CO2 + diphosphate. The enzyme catalyses 4-methyl-5-(2-phosphooxyethyl)-thiazole + 4-amino-2-methyl-5-(diphosphooxymethyl)pyrimidine + H(+) = thiamine phosphate + diphosphate. Its pathway is cofactor biosynthesis; thiamine diphosphate biosynthesis; thiamine phosphate from 4-amino-2-methyl-5-diphosphomethylpyrimidine and 4-methyl-5-(2-phosphoethyl)-thiazole: step 1/1. Its function is as follows. Condenses 4-methyl-5-(beta-hydroxyethyl)thiazole monophosphate (THZ-P) and 2-methyl-4-amino-5-hydroxymethyl pyrimidine pyrophosphate (HMP-PP) to form thiamine monophosphate (TMP). This chain is Thiamine-phosphate synthase, found in Bacteroides fragilis (strain YCH46).